A 520-amino-acid chain; its full sequence is Laccase (520 aa).

The first 21 residues, 1 to 21 (MSRFQSLLAFVVASLAAVAHA), serve as a signal peptide directing secretion. 2 Plastocyanin-like domains span residues 23 to 148 (IGPT…FVVY) and 160 to 302 (VDND…ILRY). Residues Asn72 and Asn75 are each glycosylated (N-linked (GlcNAc...) asparagine). The Cu cation site is built by His85, His87, His130, and His132. 2 disulfides stabilise this stretch: Cys106-Cys509 and Cys138-Cys226. 3 N-linked (GlcNAc...) asparagine glycosylation sites follow: Asn210, Asn229, and Asn354. Residues 369 to 491 (TVPVLLQIIS…AGFAVVFAED (123 aa)) form the Plastocyanin-like 3 domain. Cu cation is bound by residues His416, His419, His421, His473, Cys474, His475, and His479.

Belongs to the multicopper oxidase family. It depends on Cu cation as a cofactor.

Its subcellular location is the secreted. The catalysed reaction is 4 hydroquinone + O2 = 4 benzosemiquinone + 2 H2O. Lignin degradation and detoxification of lignin-derived products. Has activity towards guaiacol. The chain is Laccase from Trametes hirsuta (White-rot fungus).